Reading from the N-terminus, the 321-residue chain is Annexin A5 (321 aa).

4 Annexin repeats span residues 15–86, 87–158, 170–242, and 246–317; these read FDAR…SLMR, PARI…VLLQ, ALVE…AVVK, and SVPA…LLCG.

The protein belongs to the annexin family.

In terms of biological role, collagen-binding protein. This is Annexin A5 (ANXA5) from Gallus gallus (Chicken).